Reading from the N-terminus, the 309-residue chain is Porphobilinogen deaminase (309 aa).

S-(dipyrrolylmethanemethyl)cysteine is present on Cys-242.

The protein belongs to the HMBS family. Monomer. Dipyrromethane is required as a cofactor.

It carries out the reaction 4 porphobilinogen + H2O = hydroxymethylbilane + 4 NH4(+). It functions in the pathway porphyrin-containing compound metabolism; protoporphyrin-IX biosynthesis; coproporphyrinogen-III from 5-aminolevulinate: step 2/4. Tetrapolymerization of the monopyrrole PBG into the hydroxymethylbilane pre-uroporphyrinogen in several discrete steps. The chain is Porphobilinogen deaminase from Actinobacillus succinogenes (strain ATCC 55618 / DSM 22257 / CCUG 43843 / 130Z).